The sequence spans 136 residues: Histone H3.3 (136 aa).

The tract at residues 1-42 (MARTKQTARKSTGGKAPRKQLASKAARKSAPVSGGVKKPHRY) is disordered. An N6,N6,N6-trimethyllysine; alternate modification is found at Lys-5. At Lys-5 the chain carries N6,N6-dimethyllysine; alternate. 2 positions are modified to N6-methyllysine; alternate: Lys-5 and Lys-10. The residue at position 10 (Lys-10) is an N6-acetyllysine; alternate. Ser-11 bears the Phosphoserine mark. Position 15 is an N6,N6-dimethyllysine; alternate (Lys-15). Residues Lys-15, Lys-19, Lys-24, Lys-28, and Lys-37 each carry the N6-acetyllysine; alternate modification. Lys-19, Lys-24, Lys-28, and Lys-37 each carry N6-methyllysine; alternate. Lys-28 and Lys-37 each carry N6,N6,N6-trimethyllysine; alternate. 2 positions are modified to N6,N6-dimethyllysine; alternate: Lys-28 and Lys-37. N6-acetyllysine occurs at positions 57 and 65. N6,N6,N6-trimethyllysine; alternate is present on Lys-80. Lys-80 is subject to N6,N6-dimethyllysine; alternate. Lys-80 is modified (N6-methyllysine; alternate).

It belongs to the histone H3 family. The nucleosome is a histone octamer containing two molecules each of H2A, H2B, H3 and H4 assembled in one H3-H4 heterotetramer and two H2A-H2B heterodimers. The octamer wraps approximately 147 bp of DNA. Phosphorylated to form H3S10ph. H3S10ph promotes subsequent H3K14ac formation and is required for transcriptional activation through TBP recruitment to the promoters. Post-translationally, mono-, di- and trimethylated by the COMPASS complex to form H3K4me1/2/3. H3K4me activates gene expression by regulating transcription elongation and plays a role in telomere length maintenance. H3K4me enrichment correlates with transcription levels, and occurs in a 5' to 3' gradient with H3K4me3 enrichment at the 5'-end of genes, shifting to H3K4me2 and then H3K4me1. Methylated by SET2 to form H3K36me. H3K36me represses gene expression. Methylated by DOT1 to form H3K79me. H3K79me is required for association of SIR proteins with telomeric regions and for telomeric silencing. The COMPASS-mediated formation of H3K4me2/3 and the DOT1-mediated formation of H3K79me require H2BK123ub1. In terms of processing, acetylation of histone H3 leads to transcriptional activation. H3K14ac formation by GCN5 is promoted by H3S10ph. H3K14ac can also be formed by ESA1. H3K56ac formation occurs predominantly in newly synthesized H3 molecules during G1, S and G2/M of the cell cycle and may be involved in DNA repair.

The protein localises to the nucleus. It is found in the chromosome. Functionally, core component of nucleosome. Nucleosomes wrap and compact DNA into chromatin, limiting DNA accessibility to the cellular machineries which require DNA as a template. Histones thereby play a central role in transcription regulation, DNA repair, DNA replication and chromosomal stability. DNA accessibility is regulated via a complex set of post-translational modifications of histones, also called histone code, and nucleosome remodeling. This Lodderomyces elongisporus (strain ATCC 11503 / CBS 2605 / JCM 1781 / NBRC 1676 / NRRL YB-4239) (Yeast) protein is Histone H3.3 (HHT3).